A 435-amino-acid chain; its full sequence is uncharacterized protein (435 aa).

Transmembrane regions (helical) follow at residues 26-46 (LLSG…VAAP), 61-81 (IVFS…GSLL), 96-116 (IWSF…LYLF), 119-139 (LIGL…ALWF), 150-170 (LFDS…AFLV), 177-197 (VAFL…WQYY), 242-262 (VWGL…LLTW), 281-301 (FTAV…GWLV), 325-345 (FGFF…IICI), 347-367 (IGLA…AELA), 385-405 (LFGG…TGSF), and 407-427 (LSFL…VFVL).

The protein belongs to the major facilitator superfamily. Phthalate permease family.

The protein localises to the cell membrane. This is an uncharacterized protein from Bacillus subtilis (strain 168).